We begin with the raw amino-acid sequence, 344 residues long: uncharacterized protein (344 aa).

It belongs to the glycosyltransferase 28 family.

This is an uncharacterized protein from Methanopyrus kandleri (strain AV19 / DSM 6324 / JCM 9639 / NBRC 100938).